The primary structure comprises 285 residues: Kanamycin B dioxygenase (285 aa).

It belongs to the PhyH family. It depends on Fe cation as a cofactor.

The enzyme catalyses kanamycin B + 2-oxoglutarate + O2 = 2'-dehydrokanamycin A + succinate + NH4(+) + CO2. It functions in the pathway antibiotic biosynthesis; kanamycin biosynthesis. In terms of biological role, mediates the conversion of kanamycin B into 2'-dehydrokanamycin A during the transformation of kanamycin B to kanamycin A. The protein is Kanamycin B dioxygenase (kanJ) of Streptomyces kanamyceticus.